The primary structure comprises 304 residues: Retrotransposon Gag-like protein 4 (304 aa).

The CCHC-type zinc finger occupies 276–293 (QLCVYCNQAGHFTRDCLA).

In terms of tissue distribution, in adults, expressed in brain, eye, kidney, ovary and testis. Weakly expressed in thymus, heart and muscle.

In terms of biological role, involved in cognitive function in the brain, possibly via the noradrenergic system. This chain is Retrotransposon Gag-like protein 4, found in Mus musculus (Mouse).